Here is a 207-residue protein sequence, read N- to C-terminus: MLSVVKPLQEFGKLDKCLSRYGTRFEFNNEKQVIFSSDVNNEDTFVILEGVISLRREENVLIGITQAPYIMGLADGLMKNDIPYKLISEGNCTGYHLPAKQTITLIEQNQLWRDAFYWLAWQNRILELRDVQLIGHNSYEQIRATLLSMIDWNEELRSRIGVMNYIHQRTRISRSVVAEVLAALRKGGYIEMNKGKLVAINRLPSEY.

A DNA-binding region (H-T-H motif) is located at residues 163 to 182 (MNYIHQRTRISRSVVAEVLA).

This sequence belongs to the IprA family.

Involved in oxidative stress resistance. This is Inhibitor of hydrogen peroxide resistance from Escherichia coli O157:H7.